Reading from the N-terminus, the 508-residue chain is Maturase K (508 aa).

The protein belongs to the intron maturase 2 family. MatK subfamily.

Its subcellular location is the plastid. The protein resides in the chloroplast. Functionally, usually encoded in the trnK tRNA gene intron. Probably assists in splicing its own and other chloroplast group II introns. This Collinsia heterophylla (Purple Chinese houses) protein is Maturase K.